We begin with the raw amino-acid sequence, 147 residues long: Hemoglobin subunit epsilon-2 (147 aa).

Positions 3-147 (HFTTEENVAV…VANALTHKYH (145 aa)) constitute a Globin domain. Y64 and H93 together coordinate heme b.

The protein belongs to the globin family. Red blood cells.

Functionally, hemoglobin epsilon chain is a beta-type chain found in early embryos. The sequence is that of Hemoglobin subunit epsilon-2 (HBE2) from Bos taurus (Bovine).